Reading from the N-terminus, the 354-residue chain is Probable protein phosphatase 2C 69 (354 aa).

The PPM-type phosphatase domain maps to S33–F279. The Mn(2+) site is built by D69, G70, D231, and D270. Positions H289–V354 are disordered. 2 stretches are compositionally biased toward polar residues: residues I309 to V328 and A336 to N348.

It belongs to the PP2C family. Mg(2+) serves as cofactor. Mn(2+) is required as a cofactor.

It carries out the reaction O-phospho-L-seryl-[protein] + H2O = L-seryl-[protein] + phosphate. It catalyses the reaction O-phospho-L-threonyl-[protein] + H2O = L-threonyl-[protein] + phosphate. The sequence is that of Probable protein phosphatase 2C 69 from Arabidopsis thaliana (Mouse-ear cress).